The chain runs to 305 residues: Putative ABC transporter molybdenum-binding protein HVO_B0369 (305 aa).

Positions 1 to 40 (MNPDSAAGRSSRRAFLAAVGGVAAGGLTATAGCLGRGEEA) form a signal peptide, tat-type signal.

This sequence belongs to the bacterial solute-binding protein 1 family. WtpA subfamily. As to quaternary structure, the complex is composed of two ATP-binding proteins, two transmembrane proteins (HVO_B0370) and a solute-binding protein (HVO_B0369). In terms of processing, predicted to be exported by the Tat system. The position of the signal peptide cleavage has not been experimentally proven.

Part of an ABC transporter complex involved in molybdenum import. The polypeptide is Putative ABC transporter molybdenum-binding protein HVO_B0369 (Haloferax volcanii (strain ATCC 29605 / DSM 3757 / JCM 8879 / NBRC 14742 / NCIMB 2012 / VKM B-1768 / DS2) (Halobacterium volcanii)).